The following is an 89-amino-acid chain: Small ribosomal subunit protein uS17 (89 aa).

This sequence belongs to the universal ribosomal protein uS17 family. Part of the 30S ribosomal subunit.

Functionally, one of the primary rRNA binding proteins, it binds specifically to the 5'-end of 16S ribosomal RNA. The protein is Small ribosomal subunit protein uS17 of Coxiella burnetii (strain RSA 331 / Henzerling II).